The primary structure comprises 318 residues: Ribosomal RNA small subunit methyltransferase A (318 aa).

S-adenosyl-L-methionine is bound by residues N40, V42, G67, E88, D118, and N137. Residues 295–305 (SADRGGTDREG) are compositionally biased toward basic and acidic residues. A disordered region spans residues 295-318 (SADRGGTDREGTSPPTAGQGAPAR).

It belongs to the class I-like SAM-binding methyltransferase superfamily. rRNA adenine N(6)-methyltransferase family. RsmA subfamily.

The protein resides in the cytoplasm. It catalyses the reaction adenosine(1518)/adenosine(1519) in 16S rRNA + 4 S-adenosyl-L-methionine = N(6)-dimethyladenosine(1518)/N(6)-dimethyladenosine(1519) in 16S rRNA + 4 S-adenosyl-L-homocysteine + 4 H(+). Functionally, specifically dimethylates two adjacent adenosines (A1518 and A1519) in the loop of a conserved hairpin near the 3'-end of 16S rRNA in the 30S particle. May play a critical role in biogenesis of 30S subunits. This chain is Ribosomal RNA small subunit methyltransferase A, found in Mycolicibacterium paratuberculosis (strain ATCC BAA-968 / K-10) (Mycobacterium paratuberculosis).